A 297-amino-acid chain; its full sequence is 4-diphosphocytidyl-2-C-methyl-D-erythritol kinase (297 aa).

Catalysis depends on residues Lys-6 and Asp-144.

This sequence belongs to the GHMP kinase family. IspE subfamily.

It catalyses the reaction 4-CDP-2-C-methyl-D-erythritol + ATP = 4-CDP-2-C-methyl-D-erythritol 2-phosphate + ADP + H(+). It participates in isoprenoid biosynthesis; isopentenyl diphosphate biosynthesis via DXP pathway; isopentenyl diphosphate from 1-deoxy-D-xylulose 5-phosphate: step 3/6. In terms of biological role, catalyzes the phosphorylation of the position 2 hydroxy group of 4-diphosphocytidyl-2C-methyl-D-erythritol. The sequence is that of 4-diphosphocytidyl-2-C-methyl-D-erythritol kinase from Leptospira interrogans serogroup Icterohaemorrhagiae serovar Lai (strain 56601).